The chain runs to 105 residues: Guanyl-specific ribonuclease Ms (105 aa).

Cystine bridges form between Cys3-Cys11 and Cys7-Cys102. Residue His39 is part of the active site. The active-site Proton acceptor is Glu57. His91 (proton donor) is an active-site residue.

It belongs to the ribonuclease N1/T1 family.

The enzyme catalyses [RNA] containing guanosine + H2O = an [RNA fragment]-3'-guanosine-3'-phosphate + a 5'-hydroxy-ribonucleotide-3'-[RNA fragment].. This is Guanyl-specific ribonuclease Ms from Aspergillus phoenicis (Aspergillus saitoi).